Consider the following 158-residue polypeptide: SUMO-conjugating enzyme UBC9 (158 aa).

The UBC core domain maps to 4–157 (IALSRLAQER…VRAQAKKFAP (154 aa)). Positions 13 to 18 (RKAWRK) are interaction with SUMO1. The active-site Glycyl thioester intermediate is C93.

This sequence belongs to the ubiquitin-conjugating enzyme family. In terms of assembly, interacts with SOX9.

Its subcellular location is the nucleus. The protein resides in the cytoplasm. It participates in protein modification; protein sumoylation. Accepts the ubiquitin-like proteins SUMO1, SUMO2 and SUMO3 from the UBLE1A-UBLE1B E1 complex and catalyzes their covalent attachment to other proteins with the help of an E3 ligase such as RANBP2 or CBX4. Essential for nuclear architecture and chromosome segregation. This is SUMO-conjugating enzyme UBC9 (UBE2I) from Gallus gallus (Chicken).